Here is a 265-residue protein sequence, read N- to C-terminus: Putative hydro-lyase PA14_37210 (265 aa).

It belongs to the D-glutamate cyclase family.

This chain is Putative hydro-lyase PA14_37210, found in Pseudomonas aeruginosa (strain UCBPP-PA14).